The chain runs to 249 residues: Probable transcriptional regulatory protein Csal_1845 (249 aa).

This sequence belongs to the TACO1 family.

It localises to the cytoplasm. The polypeptide is Probable transcriptional regulatory protein Csal_1845 (Chromohalobacter salexigens (strain ATCC BAA-138 / DSM 3043 / CIP 106854 / NCIMB 13768 / 1H11)).